Reading from the N-terminus, the 473-residue chain is Ribulose bisphosphate carboxylase large chain (473 aa).

A propeptide spanning residues 1–2 (MS) is cleaved from the precursor. Position 3 is an N-acetylproline (Pro3). Lys14 carries the N6,N6,N6-trimethyllysine modification. The substrate site is built by Asn123 and Thr173. The active-site Proton acceptor is Lys175. A substrate-binding site is contributed by Lys177. Mg(2+) contacts are provided by Lys201, Asp203, and Glu204. Lys201 bears the N6-carboxylysine mark. His294 (proton acceptor) is an active-site residue. Substrate-binding residues include Arg295, His327, and Ser379.

Belongs to the RuBisCO large chain family. Type I subfamily. As to quaternary structure, heterohexadecamer of 8 large chains and 8 small chains; disulfide-linked. The disulfide link is formed within the large subunit homodimers. Mg(2+) serves as cofactor. The disulfide bond which can form in the large chain dimeric partners within the hexadecamer appears to be associated with oxidative stress and protein turnover.

The protein localises to the plastid. It is found in the chloroplast. It carries out the reaction 2 (2R)-3-phosphoglycerate + 2 H(+) = D-ribulose 1,5-bisphosphate + CO2 + H2O. It catalyses the reaction D-ribulose 1,5-bisphosphate + O2 = 2-phosphoglycolate + (2R)-3-phosphoglycerate + 2 H(+). Its function is as follows. RuBisCO catalyzes two reactions: the carboxylation of D-ribulose 1,5-bisphosphate, the primary event in carbon dioxide fixation, as well as the oxidative fragmentation of the pentose substrate in the photorespiration process. Both reactions occur simultaneously and in competition at the same active site. The polypeptide is Ribulose bisphosphate carboxylase large chain (Sesbania sesban (Egyptian riverhemp)).